We begin with the raw amino-acid sequence, 153 residues long: Pheromone-binding protein Gp-9 (153 aa).

The N-terminal stretch at 1-19 is a signal peptide; sequence MKTFVLHIFIFALVAFASA. 3 disulfide bridges follow: Cys37-Cys77, Cys73-Cys129, and Cys118-Cys138.

It belongs to the PBP/GOBP family. As to quaternary structure, homodimer.

The protein localises to the secreted. In terms of biological role, colony queen number, a major feature of social organization, is associated with worker genotype for Gp-9. Colonies are headed by either a single reproductive queen (monogyne form) or multiple queens (polygyne form). Differences in worker Gp-9 genotypes between social forms may cause differences in workers' abilities to recognize queens and regulate their numbers. The sequence is that of Pheromone-binding protein Gp-9 from Solenopsis interrupta (Fire ant).